We begin with the raw amino-acid sequence, 430 residues long: MRYFGTDGIRGVVNEFLTPELAFRLGNAVGNMVNGKVFIAKDTRNSGDMLEAALIAGITSAGADVYRCGIMPTPALALITKLEDAAGIMISASHNPPEYNGLKVIMKGYKLPDSLEERIENEMQNVKYNSFEKVGRVIDYRLAEEEYFNYIKELYKNLDLSGIKIVMDVANGATFNLNPKILEYFGAKIEVVNNEPDGFNINKDCGSTHPENIKNYIVNGKIGILHDGDGDRCIFLDENGQEFHGDKIIGLTALQLKKEGRLKNDKVVVTILSNMGLERFLNENSIDVVRTKVGDRYVLEEMLKENITLGGERSGHIIYLDRSTTGDGLITALETLSAMVNSGKRLADLSNLIPDYPQVMLNVKVSDKEVYKSKEVFEKLKSIKDYRVIVRPSGTEPVVRVLVEGPDMDESTIIANDIADLIKKFDNKKE.

The Phosphoserine intermediate role is filled by S93. The Mg(2+) site is built by S93, D227, D229, and D231. Position 93 is a phosphoserine (S93).

It belongs to the phosphohexose mutase family. The cofactor is Mg(2+). Activated by phosphorylation.

The enzyme catalyses alpha-D-glucosamine 1-phosphate = D-glucosamine 6-phosphate. Its function is as follows. Catalyzes the conversion of glucosamine-6-phosphate to glucosamine-1-phosphate. This Thermosipho africanus (strain TCF52B) protein is Phosphoglucosamine mutase.